The primary structure comprises 337 residues: Ketol-acid reductoisomerase (NADP(+)) (337 aa).

In terms of domain architecture, KARI N-terminal Rossmann spans 3 to 183 (VEMFYDADAD…GGARAGVIKT (181 aa)). NADP(+) is bound by residues 26–29 (YGSQ), Lys-49, Ser-52, Ser-54, and 84–87 (DTAQ). His-109 is an active-site residue. Residue Gly-135 participates in NADP(+) binding. The 146-residue stretch at 184–329 (TFKDETETDL…KKLRDLMSWV (146 aa)) folds into the KARI C-terminal knotted domain. Residues Asp-192, Glu-196, Glu-228, and Glu-232 each coordinate Mg(2+). Ser-253 provides a ligand contact to substrate.

It belongs to the ketol-acid reductoisomerase family. Mg(2+) serves as cofactor.

The catalysed reaction is (2R)-2,3-dihydroxy-3-methylbutanoate + NADP(+) = (2S)-2-acetolactate + NADPH + H(+). It carries out the reaction (2R,3R)-2,3-dihydroxy-3-methylpentanoate + NADP(+) = (S)-2-ethyl-2-hydroxy-3-oxobutanoate + NADPH + H(+). Its pathway is amino-acid biosynthesis; L-isoleucine biosynthesis; L-isoleucine from 2-oxobutanoate: step 2/4. It participates in amino-acid biosynthesis; L-valine biosynthesis; L-valine from pyruvate: step 2/4. Involved in the biosynthesis of branched-chain amino acids (BCAA). Catalyzes an alkyl-migration followed by a ketol-acid reduction of (S)-2-acetolactate (S2AL) to yield (R)-2,3-dihydroxy-isovalerate. In the isomerase reaction, S2AL is rearranged via a Mg-dependent methyl migration to produce 3-hydroxy-3-methyl-2-ketobutyrate (HMKB). In the reductase reaction, this 2-ketoacid undergoes a metal-dependent reduction by NADPH to yield (R)-2,3-dihydroxy-isovalerate. The chain is Ketol-acid reductoisomerase (NADP(+)) from Mycolicibacterium gilvum (strain PYR-GCK) (Mycobacterium gilvum (strain PYR-GCK)).